A 130-amino-acid polypeptide reads, in one-letter code: Small ribosomal subunit protein uS9 (130 aa).

This sequence belongs to the universal ribosomal protein uS9 family.

In Burkholderia multivorans (strain ATCC 17616 / 249), this protein is Small ribosomal subunit protein uS9.